We begin with the raw amino-acid sequence, 612 residues long: Threonine--tRNA ligase (612 aa).

The segment at 218 to 509 (DHRKLGVELG…LSEHFGGNFP (292 aa)) is catalytic. 3 residues coordinate Zn(2+): cysteine 310, histidine 361, and histidine 486.

This sequence belongs to the class-II aminoacyl-tRNA synthetase family. As to quaternary structure, homodimer. Zn(2+) is required as a cofactor.

The protein resides in the cytoplasm. The enzyme catalyses tRNA(Thr) + L-threonine + ATP = L-threonyl-tRNA(Thr) + AMP + diphosphate + H(+). In terms of biological role, catalyzes the attachment of threonine to tRNA(Thr) in a two-step reaction: L-threonine is first activated by ATP to form Thr-AMP and then transferred to the acceptor end of tRNA(Thr). Also edits incorrectly charged L-seryl-tRNA(Thr). The sequence is that of Threonine--tRNA ligase from Helicobacter pylori (strain ATCC 700392 / 26695) (Campylobacter pylori).